Consider the following 89-residue polypeptide: Large ribosomal subunit protein L37-2 (89 aa).

Residues Cys19, Cys22, Cys34, and Cys37 each coordinate Zn(2+). The C4-type zinc-finger motif lies at 19–37 (CRRCGNSSYHLQKSKCSQC).

It belongs to the eukaryotic ribosomal protein eL37 family. Zn(2+) is required as a cofactor.

Its function is as follows. Binds to the 23S rRNA. This Drosophila melanogaster (Fruit fly) protein is Large ribosomal subunit protein L37-2.